Reading from the N-terminus, the 258-residue chain is Flap endonuclease Xni (258 aa).

Aspartate 109 lines the Mg(2+) pocket. Residues 165–254 (VKPEQLPDYW…GFNLQDIRYL (90 aa)) enclose the 5'-3' exonuclease domain. Leucine 176, alanine 177, proline 185, isoleucine 187, and isoleucine 190 together coordinate K(+). The tract at residues 189–194 (GIGPKA) is interaction with DNA.

Belongs to the Xni family. It depends on Mg(2+) as a cofactor. Requires K(+) as cofactor.

Has flap endonuclease activity. During DNA replication, flap endonucleases cleave the 5'-overhanging flap structure that is generated by displacement synthesis when DNA polymerase encounters the 5'-end of a downstream Okazaki fragment. This is Flap endonuclease Xni from Photobacterium profundum (strain SS9).